The chain runs to 274 residues: Large ribosomal subunit protein uL2 (274 aa).

2 disordered regions span residues 28–53 and 221–274; these read KPYA…TTRH and RGTA…RTKK. The span at 39–48 shows a compositional bias: low complexity; the sequence is KSGGRNNNGR. A compositionally biased stretch (basic residues) spans 253 to 274; it reads KGKKTRKNKRTEHFIVHRRTKK.

This sequence belongs to the universal ribosomal protein uL2 family. As to quaternary structure, part of the 50S ribosomal subunit. Forms a bridge to the 30S subunit in the 70S ribosome.

Its function is as follows. One of the primary rRNA binding proteins. Required for association of the 30S and 50S subunits to form the 70S ribosome, for tRNA binding and peptide bond formation. It has been suggested to have peptidyltransferase activity; this is somewhat controversial. Makes several contacts with the 16S rRNA in the 70S ribosome. The protein is Large ribosomal subunit protein uL2 of Proteus mirabilis (strain HI4320).